We begin with the raw amino-acid sequence, 402 residues long: Succinylornithine transaminase (402 aa).

At Lys252 the chain carries N6-(pyridoxal phosphate)lysine.

This sequence belongs to the class-III pyridoxal-phosphate-dependent aminotransferase family. AstC subfamily. It depends on pyridoxal 5'-phosphate as a cofactor.

The catalysed reaction is N(2)-succinyl-L-ornithine + 2-oxoglutarate = N-succinyl-L-glutamate 5-semialdehyde + L-glutamate. Its pathway is amino-acid degradation; L-arginine degradation via AST pathway; L-glutamate and succinate from L-arginine: step 3/5. Its function is as follows. Catalyzes the transamination of N(2)-succinylornithine and alpha-ketoglutarate into N(2)-succinylglutamate semialdehyde and glutamate. Can also act as an acetylornithine aminotransferase. The chain is Succinylornithine transaminase from Photorhabdus laumondii subsp. laumondii (strain DSM 15139 / CIP 105565 / TT01) (Photorhabdus luminescens subsp. laumondii).